A 670-amino-acid polypeptide reads, in one-letter code: Zinc finger protein 526 (670 aa).

C2H2-type zinc fingers lie at residues 57–79 (FMCSECGSLYNTLEEVLSHQEQH), 108–130 (FQCGECSQLILSPGELLAHQDAH), and 140–163 (YQCWDCQELFPSPELWVAHRKAQH). Disordered stretches follow at residues 168–196 (VAEPPVPPPLPPPTPLPPPSPPSEVKMEP) and 217–304 (GTHF…ATHP). The span at 171–189 (PPVPPPLPPPTPLPPPSPP) shows a compositional bias: pro residues. The C2H2-type 4 zinc finger occupies 197 to 219 (YECPECSTLCATPEEFLEHQGTH). The span at 217-231 (GTHFDSLEKEERNGL) shows a compositional bias: basic and acidic residues. Over residues 232–263 (EEEEEDDEEDEEDDEEMEDEEAMAEVGDDAVG) the composition is skewed to acidic residues. 9 consecutive C2H2-type zinc fingers follow at residues 305-327 (FHCSQCQRSFSSANRLQAHGRAH), 332-354 (HECTTCSKVFKKAASLEQHLRLH), 360-382 (YLCVDCGRGFGTELTLVAHRRAH), 388-409 (HRCRCGKTFSNMTKFLYHRRTH), 442-465 (LPCPQCSKSFASASRLSRHRRAVH), 472-494 (HRCGVCGKGFKKLIHVRNHLRTH), 500-522 (FQCHSCGKTFASLANLSRHQLTH), 528-550 (YQCLDCGKRFTQSSNLQQHRRLH), and 573-595 (YYCGTCGRWFRAMAGLRLHQRVH). Positions 409–443 (HAGKSGAPPTGATAPPAPAEPTPPPPPPAPPAQLP) are disordered. Positions 423–442 (PPAPAEPTPPPPPPAPPAQL) are enriched in pro residues. Residues 601-621 (LTLQPPRSPSPAPPPPPEPQQ) form a disordered region. Pro residues predominate over residues 606–619 (PRSPSPAPPPPPEP).

The protein belongs to the krueppel C2H2-type zinc-finger protein family. Widely expressed.

The protein resides in the nucleus. Its function is as follows. May be involved in transcriptional regulation. The protein is Zinc finger protein 526 (ZNF526) of Homo sapiens (Human).